The following is a 412-amino-acid chain: Argininosuccinate synthase (412 aa).

ATP is bound by residues 15 to 23 (AYSGGLDTS) and alanine 42. The L-citrulline site is built by tyrosine 93 and serine 98. Glycine 123 provides a ligand contact to ATP. 3 residues coordinate L-aspartate: threonine 125, asparagine 129, and aspartate 130. An L-citrulline-binding site is contributed by asparagine 129. Residues arginine 133, serine 185, serine 194, glutamate 270, and tyrosine 282 each contribute to the L-citrulline site.

Belongs to the argininosuccinate synthase family. Type 1 subfamily. In terms of assembly, homotetramer.

The protein localises to the cytoplasm. The enzyme catalyses L-citrulline + L-aspartate + ATP = 2-(N(omega)-L-arginino)succinate + AMP + diphosphate + H(+). Its pathway is amino-acid biosynthesis; L-arginine biosynthesis; L-arginine from L-ornithine and carbamoyl phosphate: step 2/3. The protein is Argininosuccinate synthase of Psychrobacter cryohalolentis (strain ATCC BAA-1226 / DSM 17306 / VKM B-2378 / K5).